The chain runs to 810 residues: Protein 4.1 (810 aa).

A disordered region spans residues 1 to 124 (MTTEKSLVAE…KEIEFGTSLD (124 aa)). At S14 the chain carries Phosphoserine. T61 is modified (phosphothreonine). Positions 62 to 76 (PTHEDLTKNKERTSE) are enriched in basic and acidic residues. S85, S86, S96, S105, S122, S150, S152, S153, S189, and S192 each carry phosphoserine. Residues 102-118 (DVESAKEKCEGGQKEIE) show a composition bias toward basic and acidic residues. A disordered region spans residues 152–203 (SSAETQPAQEEHREDPDFETKEGGGLEECSKIEVKEESPESKAERELKASQK). The segment covering 160–200 (QEEHREDPDFETKEGGGLEECSKIEVKEESPESKAERELKA) has biased composition (basic and acidic residues). The region spanning 211-492 (MHCKVSLLDD…EHHTFFRLTS (282 aa)) is the FERM domain. Position 223 is a phosphotyrosine (Y223). T379 carries the phosphothreonine modification. The interval 518–613 (TRQASALIDR…DQAEPEPTEV (96 aa)) is disordered. Residues S522, S541, S543, and S555 each carry the phosphoserine modification. The span at 587–601 (AQKETVKDEEKKEEG) shows a compositional bias: basic and acidic residues. Residues 615 to 659 (KDLDKSQEEIKKHHASISELKKNFMESVPEPRPSEWDKRLSTHSP) form a spectrin--actin-binding region. Phosphoserine occurs at positions 620, 630, 655, and 658. Residues 660–810 (FRTLNINGQL…VHQETEISEE (151 aa)) form a C-terminal (CTD) region. A phosphothreonine mark is found at T682 and T805.

As to quaternary structure, binds with a high affinity to glycophorin and with lower affinity to band III protein. Associates with the nuclear mitotic apparatus. Binds calmodulin, CPAP and DLG1. Also found to associate with contractile apparatus and tight junctions. Interacts with NUMA1; this interaction is negatively regulated by CDK1 during metaphase and promotes for anaphase-specific localization of NUMA1 in symmetrically dividing cells. Interacts with ATP2B1; regulates small intestinal calcium absorption through regulation of membrane expression of ATP2B1. In terms of processing, O-glycosylated; contains N-acetylglucosamine side chains in the C-terminal domain. Post-translationally, phosphorylated at multiple sites by different protein kinases and each phosphorylation event selectively modulates the protein's functions.

It localises to the nucleus. The protein resides in the cytoplasm. The protein localises to the cytoskeleton. Its subcellular location is the cell cortex. Protein 4.1 is a major structural element of the erythrocyte membrane skeleton. It plays a key role in regulating membrane physical properties of mechanical stability and deformability by stabilizing spectrin-actin interaction. Recruits DLG1 to membranes. Required for dynein-dynactin complex and NUMA1 recruitment at the mitotic cell cortex during anaphase. The sequence is that of Protein 4.1 from Canis lupus familiaris (Dog).